A 155-amino-acid chain; its full sequence is RNA-binding protein 3 (155 aa).

The 79-residue stretch at 6 to 84 (GKLFVGGLNF…RQIRVDHAGK (79 aa)) folds into the RRM domain. Arg-47 bears the Omega-N-methylarginine mark. The tract at residues 79 to 155 (VDHAGKSARG…GGNYRDNYDN (77 aa)) is disordered. The residue at position 105 (Arg-105) is an Asymmetric dimethylarginine; alternate. Arg-105 carries the post-translational modification Dimethylated arginine; alternate. An Omega-N-methylarginine; alternate modification is found at Arg-105. The segment covering 105–114 (RGGGDQGYGS) has biased composition (gly residues). Omega-N-methylarginine is present on residues Arg-120 and Arg-130. 2 positions are modified to phosphoserine: Ser-135 and Ser-145. A Phosphotyrosine modification is found at Tyr-153.

Interacts with RPL4. Associates with the 60S ribosomal subunits. Post-translationally, arg-105 is dimethylated, probably to asymmetric dimethylarginine. In terms of processing, phosphorylated. Isoform 2 is methylated. In terms of tissue distribution, widely expressed in the brain. Highly expressed in the cerebellum and olfactory bulb (at protein level). Expressed in neurons and glial cells.

The protein resides in the nucleus. It is found in the cytoplasm. Its subcellular location is the cell projection. The protein localises to the dendrite. Its function is as follows. Cold-inducible mRNA binding protein that enhances global protein synthesis at both physiological and mild hypothermic temperatures. Reduces the relative abundance of microRNAs, when overexpressed. Enhances phosphorylation of translation initiation factors and active polysome formation. The sequence is that of RNA-binding protein 3 (Rbm3) from Rattus norvegicus (Rat).